Here is a 387-residue protein sequence, read N- to C-terminus: Colicin-N (387 aa).

The span at 1–11 (MGSNGADNAHN) shows a compositional bias: polar residues. Positions 1 to 106 (MGSNGADNAH…ITITPDNSKP (106 aa)) are disordered. The segment covering 14–30 (FGGGKNPGIGNTSGAGS) has biased composition (gly residues). Positions 31 to 48 (NGSASSNRGNSNGWSWSN) are enriched in low complexity. Positions 78–87 (GNSGNRGNNG) are enriched in gly residues. The next 2 membrane-spanning stretches (helical) occupy residues 325 to 345 (IIGG…LSFL) and 350 to 370 (LAVT…SSFI).

The protein belongs to the channel forming colicin family.

It localises to the cell membrane. Functionally, this colicin is a channel-forming colicin. This class of transmembrane toxins depolarize the cytoplasmic membrane, leading to dissipation of cellular energy. In terms of biological role, colicins are polypeptide toxins produced by and active against E.coli and closely related bacteria. The polypeptide is Colicin-N (cna) (Escherichia coli).